Reading from the N-terminus, the 381-residue chain is Succinyl-diaminopimelate desuccinylase (381 aa).

Position 68 (His-68) interacts with Zn(2+). Asp-70 is a catalytic residue. Asp-101 is a binding site for Zn(2+). Glu-135 serves as the catalytic Proton acceptor. Zn(2+) is bound by residues Glu-136, Glu-164, and His-350.

Belongs to the peptidase M20A family. DapE subfamily. In terms of assembly, homodimer. Zn(2+) serves as cofactor. It depends on Co(2+) as a cofactor.

It catalyses the reaction N-succinyl-(2S,6S)-2,6-diaminopimelate + H2O = (2S,6S)-2,6-diaminopimelate + succinate. It participates in amino-acid biosynthesis; L-lysine biosynthesis via DAP pathway; LL-2,6-diaminopimelate from (S)-tetrahydrodipicolinate (succinylase route): step 3/3. Functionally, catalyzes the hydrolysis of N-succinyl-L,L-diaminopimelic acid (SDAP), forming succinate and LL-2,6-diaminopimelate (DAP), an intermediate involved in the bacterial biosynthesis of lysine and meso-diaminopimelic acid, an essential component of bacterial cell walls. This chain is Succinyl-diaminopimelate desuccinylase, found in Neisseria meningitidis serogroup C (strain 053442).